A 110-amino-acid polypeptide reads, in one-letter code: Acid stress chaperone HdeA (110 aa).

The first 21 residues, 1–21, serve as a signal peptide directing secretion; the sequence is MKKVLGVILGGLLLLPVVSNA. C39 and C87 are oxidised to a cystine.

Belongs to the HdeA family.

It is found in the periplasm. Functionally, required for optimal acid stress protection. Exhibits a chaperone-like activity only at low pH by suppressing non-specifically the aggregation of denaturated periplasmic proteins. This Escherichia coli O157:H7 protein is Acid stress chaperone HdeA.